We begin with the raw amino-acid sequence, 399 residues long: Methylthioribose kinase (399 aa).

ATP-binding positions include Asn-40, Lys-57, and 111 to 113; that span reads EDL. Asp-229 provides a ligand contact to substrate. 246–248 is a binding site for ATP; that stretch reads DAE. Arg-344 is a binding site for substrate.

Belongs to the methylthioribose kinase family. As to quaternary structure, homodimer.

It carries out the reaction 5-(methylsulfanyl)-D-ribose + ATP = 5-(methylsulfanyl)-alpha-D-ribose 1-phosphate + ADP + H(+). It functions in the pathway amino-acid biosynthesis; L-methionine biosynthesis via salvage pathway; S-methyl-5-thio-alpha-D-ribose 1-phosphate from S-methyl-5'-thioadenosine (hydrolase route): step 2/2. In terms of biological role, catalyzes the phosphorylation of methylthioribose into methylthioribose-1-phosphate. In Yersinia enterocolitica serotype O:8 / biotype 1B (strain NCTC 13174 / 8081), this protein is Methylthioribose kinase.